The primary structure comprises 50 residues: U23-theraphotoxin-Cg1a 2 (50 aa).

Disulfide bonds link Cys22–Cys36, Cys29–Cys41, and Cys35–Cys47.

It belongs to the neurotoxin 10 (Hwtx-1) family. 64 (Jztx-20) subfamily. In terms of tissue distribution, expressed by the venom gland.

It localises to the secreted. Probable ion channel inhibitor. This is U23-theraphotoxin-Cg1a 2 from Chilobrachys guangxiensis (Chinese earth tiger tarantula).